Consider the following 393-residue polypeptide: MSSALANIYARLPVSFTHGRGVWLWDTGERRYLDALAGIGVSCLGHGHPGLVAAISEQAARLIHTSNIYEVPQQAALARRLAELSGMSEVLFSNSGSEANEAAIKLARYYGYKQGNTHAHIITMDSSWHGRTLATLAATGSDKARQGFGPMPSGFIQVPYNDLPAIRAAGEAEPRVTAVLLEVLQGEGGIRPSDMAFLRGVRQLCTERGWLLMIDEVQSGIGRTGKWFAHQWADIRPDVMTLAKGLAGGVPIGAMLAAGPAAGVFAPGSHGTTFGGGPLACAAGLAVIDAIEQEGLLANAHEVGAHLHAALASELAGVPGIIEVRGHGLMLGIELDRPCGILATRAMEAGLLINVTRERVVRLLPPLILSGEEADQIVRILVPLIKQFLAQQQ.

Arg131 contacts N(2)-acetyl-L-ornithine. 215–218 (DEVQ) provides a ligand contact to pyridoxal 5'-phosphate. Lys244 carries the N6-(pyridoxal phosphate)lysine modification. N(2)-acetyl-L-ornithine is bound at residue Thr272. Thr273 provides a ligand contact to pyridoxal 5'-phosphate.

This sequence belongs to the class-III pyridoxal-phosphate-dependent aminotransferase family. ArgD subfamily. In terms of assembly, homodimer. Requires pyridoxal 5'-phosphate as cofactor.

The protein localises to the cytoplasm. The enzyme catalyses N(2)-acetyl-L-ornithine + 2-oxoglutarate = N-acetyl-L-glutamate 5-semialdehyde + L-glutamate. It functions in the pathway amino-acid biosynthesis; L-arginine biosynthesis; N(2)-acetyl-L-ornithine from L-glutamate: step 4/4. The sequence is that of Acetylornithine aminotransferase 1 from Bordetella parapertussis (strain 12822 / ATCC BAA-587 / NCTC 13253).